The sequence spans 283 residues: (+)-O-methylkolavelool synthase (283 aa).

S-adenosyl-L-methionine-binding positions include glutamine 106, 129–130, and histidine 151; that span reads NA.

Belongs to the methyltransferase superfamily.

The catalysed reaction is (+)-kolavelool + S-adenosyl-L-methionine = (+)-O-methylkolavelool + S-adenosyl-L-homocysteine + H(+). In terms of biological role, involved in the biosynthesis of the diterpene (+)-O-methylkolavelool. Catalyzes the transfer of a methyl group from S-adenosyl-L-methionine to the hydroxy group of (+)-kolavelool, forming (+)-O-methylkolavelool. This chain is (+)-O-methylkolavelool synthase, found in Herpetosiphon aurantiacus (strain ATCC 23779 / DSM 785 / 114-95).